Consider the following 455-residue polypeptide: Trigger factor (455 aa).

One can recognise a PPIase FKBP-type domain in the interval 169 to 262 (GDVAIVDYEG…VKELKAKELP (94 aa)).

Belongs to the FKBP-type PPIase family. Tig subfamily.

It localises to the cytoplasm. It catalyses the reaction [protein]-peptidylproline (omega=180) = [protein]-peptidylproline (omega=0). Functionally, involved in protein export. Acts as a chaperone by maintaining the newly synthesized protein in an open conformation. Functions as a peptidyl-prolyl cis-trans isomerase. This Rippkaea orientalis (strain PCC 8801 / RF-1) (Cyanothece sp. (strain PCC 8801)) protein is Trigger factor.